Reading from the N-terminus, the 436-residue chain is Cyclic nucleotide-binding domain-containing protein 1 (436 aa).

The span at 89-105 shows a compositional bias: basic and acidic residues; that stretch reads EQRELNEGKEESQHQQP. The tract at residues 89-108 is disordered; the sequence is EQRELNEGKEESQHQQPDDS. Position 322–436 (322–436) interacts with a nucleoside 3',5'-cyclic phosphate; the sequence is YYEEWPTLSI…IIEDKDLFVA (115 aa).

In Homo sapiens (Human), this protein is Cyclic nucleotide-binding domain-containing protein 1 (CNBD1).